A 250-amino-acid polypeptide reads, in one-letter code: 5'-nucleotidase SurE (250 aa).

The a divalent metal cation site is built by D8, D9, S40, and N95.

This sequence belongs to the SurE nucleotidase family. A divalent metal cation serves as cofactor.

It is found in the cytoplasm. It catalyses the reaction a ribonucleoside 5'-phosphate + H2O = a ribonucleoside + phosphate. In terms of biological role, nucleotidase that shows phosphatase activity on nucleoside 5'-monophosphates. The chain is 5'-nucleotidase SurE from Nitratidesulfovibrio vulgaris (strain ATCC 29579 / DSM 644 / CCUG 34227 / NCIMB 8303 / VKM B-1760 / Hildenborough) (Desulfovibrio vulgaris).